Here is a 495-residue protein sequence, read N- to C-terminus: uncharacterized protein (495 aa).

The CHY-type zinc-finger motif lies at 389 to 457 (PLPNNGACEH…KDATCPHCGN (69 aa)). 12 residues coordinate Zn(2+): cysteine 396, histidine 398, cysteine 410, cysteine 411, cysteine 417, cysteine 420, histidine 421, histidine 427, cysteine 437, cysteine 440, cysteine 452, and cysteine 455. Over residues 473-483 (GMRDRVRMSRK) the composition is skewed to basic and acidic residues. The interval 473-495 (GMRDRVRMSRKDPRKYKRKHHGN) is disordered. The segment covering 484–495 (DPRKYKRKHHGN) has biased composition (basic residues).

The protein resides in the cytoplasm. This is an uncharacterized protein from Schizosaccharomyces pombe (strain 972 / ATCC 24843) (Fission yeast).